Reading from the N-terminus, the 121-residue chain is Small ribosomal subunit protein uS13 (121 aa).

The disordered stretch occupies residues 90–121 (RHRHGLPVRGQHTKNNARTRKGKAVAIAGKKK).

It belongs to the universal ribosomal protein uS13 family. In terms of assembly, part of the 30S ribosomal subunit. Forms a loose heterodimer with protein S19. Forms two bridges to the 50S subunit in the 70S ribosome.

Its function is as follows. Located at the top of the head of the 30S subunit, it contacts several helices of the 16S rRNA. In the 70S ribosome it contacts the 23S rRNA (bridge B1a) and protein L5 of the 50S subunit (bridge B1b), connecting the 2 subunits; these bridges are implicated in subunit movement. Contacts the tRNAs in the A and P-sites. The polypeptide is Small ribosomal subunit protein uS13 (Limosilactobacillus fermentum (strain NBRC 3956 / LMG 18251) (Lactobacillus fermentum)).